A 631-amino-acid chain; its full sequence is Probable ATP-dependent RNA helicase DDX53 (631 aa).

The KH domain occupies 48–109; the sequence is EPPLCFKIKN…EMKAKAKAAI (62 aa). Positions 222-250 match the Q motif motif; sequence RFKDAFQQYPDLLKSIIRVGIVKPTPIQS. ATP contacts are provided by residues Lys-244, Gln-249, 268–273, and His-311; that span reads TGTGKT. In terms of domain architecture, Helicase ATP-binding spans 253 to 428; it reads WPIILQGIDL…LSYLKDPMIV (176 aa). Residues 376–379 carry the DEAD box motif; the sequence is DEAD. The 162-residue stretch at 440 to 601 folds into the Helicase C-terminal domain; it reads TVKQNIIVTT…SVPEDLVVMA (162 aa).

Belongs to the DEAD box helicase family. As to expression, expressed in testis. Wide expression in various cancer tissues and cancer cell lines.

It localises to the nucleus. It catalyses the reaction ATP + H2O = ADP + phosphate + H(+). The chain is Probable ATP-dependent RNA helicase DDX53 (DDX53) from Homo sapiens (Human).